The following is a 784-amino-acid chain: Toll-like receptor 2 (784 aa).

The first 20 residues, 1–20 (MPRALWTAWVWAVIILSTEG), serve as a signal peptide directing secretion. Over 21–587 (ASDQASSLSC…ARLSLSECHR (567 aa)) the chain is Extracellular. Residues Cys-30 and Cys-36 are joined by a disulfide bond. 19 LRR repeats span residues 54 to 77 (VKSL…RCVN), 78 to 101 (LKTL…HLRN), 102 to 125 (LEYL…SLYV), 126 to 150 (LKFL…HLPN), 151 to 175 (LRTL…GLTF), 176 to 199 (LEEL…SIQN), 200 to 223 (ISHL…IVSS), 224 to 250 (LDCF…MSTS), 251 to 278 (VKKL…YVSG), 279 to 308 (ILEV…HLGN), 309 to 337 (VETL…LTGR), 338 to 361 (VKRV…HLKS), 362 to 388 (LEYL…AWPF), 389 to 414 (LQTL…TLEN), 415 to 437 (LNNL…WPGK), 438 to 457 (MKQL…CLPQ), 458 to 478 (TLEI…ILPQ), 479 to 500 (LKEL…FLPV), and 501 to 524 (LSVM…SFQQ). An N-linked (GlcNAc...) asparagine glycan is attached at Asn-114. N-linked (GlcNAc...) asparagine glycosylation is present at Asn-199. An intrachain disulfide couples Cys-353 to Cys-382. The cysteines at positions 432 and 454 are disulfide-linked. N-linked (GlcNAc...) asparagine glycosylation is present at Asn-442. Positions 525–579 (LKTLEAGGNNFICSCDFLSFTQGQQALGRVLVDWPDDYRCDSPSHVRGQRVQDAR) constitute an LRRCT domain. Residues 588–608 (AAVVSAACCALFLLLLLTGVL) traverse the membrane as a helical segment. Topologically, residues 609–784 (CHRFHGLWYM…WLNLRAAIRS (176 aa)) are cytoplasmic. The TIR domain maps to 639-782 (ICYDAFVSYS…GFWLNLRAAI (144 aa)). A Glycyl lysine isopeptide (Lys-Gly) (interchain with G-Cter in ubiquitin) cross-link involves residue Lys-754. The short motif at 761-778 (YLEWPVDETQQEGFWLNL) is the ATG16L1-binding motif element.

It belongs to the Toll-like receptor family. Interacts with LY96, TLR1 and TLR6 (via extracellular domain). TLR2 seems to exist in heterodimers with either TLR1 or TLR6 before stimulation by the ligand. The heterodimers form bigger oligomers in response to their corresponding ligands as well as further heterotypic associations with other receptors such as CD14 and/or CD36. Binds MYD88 (via TIR domain). Interacts with TICAM1. Interacts with CNPY3. Interacts with ATG16L1. Interacts with PPP1R11. Interacts with TICAM2. Interacts with TIRAP. Post-translationally, ubiquitinated at Lys-754 by PPP1R11, leading to its degradation. Deubiquitinated by USP2. Glycosylation of Asn-442 is critical for secretion of the N-terminal ectodomain of TLR2.

The protein resides in the membrane. It localises to the cytoplasmic vesicle. It is found in the phagosome membrane. Its subcellular location is the membrane raft. Functionally, cooperates with LY96 to mediate the innate immune response to bacterial lipoproteins and other microbial cell wall components. Cooperates with TLR1 or TLR6 to mediate the innate immune response to bacterial lipoproteins or lipopeptides. Acts via MYD88 and TRAF6, leading to NF-kappa-B activation, cytokine secretion and the inflammatory response. May also promote apoptosis in response to lipoproteins. Forms activation clusters composed of several receptors depending on the ligand, these clusters trigger signaling from the cell surface and subsequently are targeted to the Golgi in a lipid-raft dependent pathway. Forms the cluster TLR2:TLR6:CD14:CD36 in response to diacylated lipopeptides and TLR2:TLR1:CD14 in response to triacylated lipopeptides. This Bos taurus (Bovine) protein is Toll-like receptor 2 (TLR2).